We begin with the raw amino-acid sequence, 513 residues long: ATP synthase subunit alpha (513 aa).

ATP is bound at residue 169–176 (GDRQIGKT).

Belongs to the ATPase alpha/beta chains family. F-type ATPases have 2 components, CF(1) - the catalytic core - and CF(0) - the membrane proton channel. CF(1) has five subunits: alpha(3), beta(3), gamma(1), delta(1), epsilon(1). CF(0) has three main subunits: a(1), b(2) and c(9-12). The alpha and beta chains form an alternating ring which encloses part of the gamma chain. CF(1) is attached to CF(0) by a central stalk formed by the gamma and epsilon chains, while a peripheral stalk is formed by the delta and b chains.

The protein resides in the cell inner membrane. It carries out the reaction ATP + H2O + 4 H(+)(in) = ADP + phosphate + 5 H(+)(out). Produces ATP from ADP in the presence of a proton gradient across the membrane. The alpha chain is a regulatory subunit. In Shewanella sediminis (strain HAW-EB3), this protein is ATP synthase subunit alpha.